The following is a 77-amino-acid chain: MMTEDQKFKYLTKIEELEAGCFSDWTKEDITGDLKYLKKGIIEESIELIRAVNGLTYSEELHDFTQEIIEELDISPL.

In terms of assembly, interacts with host homodimeric histone-like protein (HU) hupA; thereby replacing dsDNA from the HU-DNA complex.

In terms of biological role, acts as a host growth inhibitor by inhibiting DNA-binding of microbial histone-like protein HU, thereby preventing chromosome segregation and causing filamentous cell morphology and growth defects in the host. The chain is Inhibitor of histone-like protein HU from Bacillus phage SP01 (Bacteriophage SP01).